Reading from the N-terminus, the 339-residue chain is Geranylgeranyl pyrophosphate synthase AN1592 (339 aa).

Residues Lys41, Arg44, and His73 each contribute to the isopentenyl diphosphate site. The Mg(2+) site is built by Asp80 and Asp84. Arg89 provides a ligand contact to dimethylallyl diphosphate. Isopentenyl diphosphate is bound at residue Arg90. Dimethylallyl diphosphate-binding residues include Lys192, Thr193, and Gln228. Asp231 is a binding site for Mg(2+). Dimethylallyl diphosphate-binding residues include Asn235, Lys245, and Lys255.

The protein belongs to the FPP/GGPP synthase family. It depends on Mg(2+) as a cofactor.

The enzyme catalyses isopentenyl diphosphate + dimethylallyl diphosphate = (2E)-geranyl diphosphate + diphosphate. It carries out the reaction isopentenyl diphosphate + (2E)-geranyl diphosphate = (2E,6E)-farnesyl diphosphate + diphosphate. It catalyses the reaction isopentenyl diphosphate + (2E,6E)-farnesyl diphosphate = (2E,6E,10E)-geranylgeranyl diphosphate + diphosphate. It participates in secondary metabolite biosynthesis. Geranylgeranyl pyrophosphate synthase; part of the gene cluster that mediates the biosynthesis of erinacines, cyathane-xylosides that show unique biological activities, including leishmanicidal activity, stimulating activity for nerve growth-factor synthesis, and agonistic activity toward the kappa opioid receptor. The geranylgeranyl diphosphate (GGPP) synthase eriE catalyzes the first step in erinacines biosynthesis via conversion of farnesyl pyrophosphate and isopentyl pyrophosphate into geranylgeranyl pyrophosphate (GGPP). GGPP is then substrate of the diterpene cyclase eriG for the production of cyatha-3,12-diene. The cytochrome P450 monooxygenase eriI then hydroxylates cyatha-3,12-diene at C-14 of the seven-membered ring to produce erinacol, which is further hydroxylated at C-15 by the cytochrome P450 monooxygenase eriC to yield cyathadiol. The cytochrome P450 monooxygenase eriA then catalyzes C-11 hydroxylation in the presence of the short chain dehydrogenase/reductase (SDR) eriH, which leads to the production of cyathatriol. The acetyltransferase eriL converts cyathatriol into 11-O-acetyl-cyathatriol. The SDR eriH catalyzes further oxidation of 11-O-acetyl-cyathatriol into 1-O-acetylcyathin A3. Finally, the glycosyl transferase eriJ tranfers xylose from UDP-xylose onto C-14 of 11-O-acetyl-cyathatriol to form eracine Q. EriJ is also able to convert 11-O-acetyl-cyathatriol to eracine Q2 by using UDP-D-glucose as cosubstrate, but at a lower rate. In the absence of eriL and eriJ, the SDR eriH is able to convert cyathatriol to cyathin A3; this is likely a switching mechanism in the biosynthesis of cyathins (C-14 ketogroup)and erinacines (C-14 glycosylated group). The roles of the SDR eriB, the polyprenyl transferase eriF and the dehydrogenase eriK have still to be identified. The polypeptide is Geranylgeranyl pyrophosphate synthase AN1592 (Hericium erinaceus (Lion's mane mushroom)).